The following is a 1667-amino-acid chain: Myomesin-1 (1667 aa).

2 positions are modified to phosphoserine: S124 and S142. A compositionally biased stretch (low complexity) spans 192–210; the sequence is SKQSTASKQSATSKRTTST. Residues 192–217 form a disordered region; it reads SKQSTASKQSATSKRTTSTLQREETF. 2 Ig-like C2-type domains span residues 258-349 and 376-478; these read PEFI…ASVV and PYGY…AYVF. Fibronectin type-III domains lie at 492–587, 620–714, and 721–814; these read APLD…ALDP, PPTD…VVGD, and APGK…VKAA. Residues 818-915 form a disordered region; sequence GVSPDVWPQL…PKKKKDPVAV (98 aa). Residues S863 and S867 each carry the phosphoserine modification. A compositionally biased stretch (low complexity) spans 885 to 894; the sequence is EPLSSPPQEA. 2 Fibronectin type-III domains span residues 918 to 1016 and 1023 to 1122; these read APYD…CEEW and PPHS…TRPG. A Phosphoserine modification is found at S1036. Ig-like C2-type domains follow at residues 1114 to 1212, 1340 to 1426, and 1555 to 1644; these read PVVA…EEMK, PHFA…LKLV, and RVLG…FTVS.

Homodimer. Interacts with TTN/titin and PNKD. As to expression, ubiquitously expressed in all striated muscles. Expressed in all fiber types.

It localises to the cytoplasm. The protein localises to the myofibril. The protein resides in the sarcomere. It is found in the m line. In terms of biological role, may link the intermediate filament cytoskeleton to the M-disk of the myofibrils in striated muscle. May also contact myosin filaments. Also binds beta-integrins. The chain is Myomesin-1 (Myom1) from Mus musculus (Mouse).